A 538-amino-acid chain; its full sequence is Putative cysteine ligase BshC (538 aa).

A coiled-coil region spans residues 460–485; it reads KINEQIELLERMLKRNIEKKHEVELN.

It belongs to the BshC family.

Its function is as follows. Involved in bacillithiol (BSH) biosynthesis. May catalyze the last step of the pathway, the addition of cysteine to glucosamine malate (GlcN-Mal) to generate BSH. The sequence is that of Putative cysteine ligase BshC from Bacillus cereus (strain Q1).